A 473-amino-acid polypeptide reads, in one-letter code: Serine palmitoyltransferase 1 (473 aa).

Over 1-15 (MATATEQWVLVEMVQ) the chain is Lumenal. The segment at 1-66 (MATATEQWVL…KEELIEEWQP (66 aa)) is interaction with SPTLC2. A helical membrane pass occupies residues 16–36 (ALYEAPAYHLILEGILILWII). Over 37-473 (RLLFSKTYKL…IKEVAQAVLL (437 aa)) the chain is Cytoplasmic. The residue at position 164 (Tyr-164) is a Phosphotyrosine; by ABL.

The protein belongs to the class-II pyridoxal-phosphate-dependent aminotransferase family. As to quaternary structure, component of the serine palmitoyltransferase (SPT) complex, which is also composed of SPTLC2 or SPTLC3 and SPTSSA or SPTSSB. The heterodimer with SPTLC2 or SPTLC3 forms the catalytic core of the enzyme, while SPTSSA or SPTSSB subunits determine substrate specificity. SPT also interacts with ORMDL proteins, especially ORMDL3, which negatively regulate SPT activity in the presence of ceramides. Forms dimers of heterodimers with SPTLC2. Interacts with RTN4. The cofactor is pyridoxal 5'-phosphate. Phosphorylation at Tyr-164 inhibits activity and promotes cell survival.

Its subcellular location is the endoplasmic reticulum membrane. The enzyme catalyses L-serine + hexadecanoyl-CoA + H(+) = 3-oxosphinganine + CO2 + CoA. The catalysed reaction is octadecanoyl-CoA + L-serine + H(+) = 3-oxoeicosasphinganine + CO2 + CoA. It carries out the reaction tetradecanoyl-CoA + L-serine + H(+) = 3-oxohexadecasphinganine + CO2 + CoA. It catalyses the reaction dodecanoyl-CoA + L-serine + H(+) = 3-oxotetradecasphinganine + CO2 + CoA. It participates in lipid metabolism; sphingolipid metabolism. Its activity is regulated as follows. SPT complex catalytic activity is negatively regulated by ORMDL proteins, including ORMDL3, in the presence of ceramides. This mechanism allows to maintain ceramide levels at sufficient concentrations for the production of complex sphingolipids, but which prevents the accumulation of ceramides to levels that trigger apoptosis. Its function is as follows. Component of the serine palmitoyltransferase multisubunit enzyme (SPT) that catalyzes the initial and rate-limiting step in sphingolipid biosynthesis by condensing L-serine and activated acyl-CoA (most commonly palmitoyl-CoA) to form long-chain bases. The SPT complex is also composed of SPTLC2 or SPTLC3 and SPTSSA or SPTSSB. Within this complex, the heterodimer with SPTLC2 or SPTLC3 forms the catalytic core. The composition of the serine palmitoyltransferase (SPT) complex determines the substrate preference. The SPTLC1-SPTLC2-SPTSSA complex shows a strong preference for C16-CoA substrate, while the SPTLC1-SPTLC3-SPTSSA isozyme uses both C14-CoA and C16-CoA as substrates, with a slight preference for C14-CoA. The SPTLC1-SPTLC2-SPTSSB complex shows a strong preference for C18-CoA substrate, while the SPTLC1-SPTLC3-SPTSSB isozyme displays an ability to use a broader range of acyl-CoAs, without apparent preference. Required for adipocyte cell viability and metabolic homeostasis. The polypeptide is Serine palmitoyltransferase 1 (SPTLC1) (Macaca fascicularis (Crab-eating macaque)).